Consider the following 83-residue polypeptide: Parvalbumin beta 3 (83 aa).

EF-hand domains lie at 13–48 (KSNDDVKKAFFVIDQDKSGFIEEDELKLFLQNFSAG) and 52–83 (LTAGETKTFLAAGDSDGDGMIGVDEFQALVKA). Asp26, Asp28, Ser30, Phe32, Glu34, Glu37, Asp65, Asp67, Asp69, Met71, and Glu76 together coordinate Ca(2+).

This sequence belongs to the parvalbumin family.

Functionally, in muscle, parvalbumin is thought to be involved in relaxation after contraction. It binds two calcium ions. In Macruronus novaezelandiae (Blue grenadier), this protein is Parvalbumin beta 3.